A 261-amino-acid chain; its full sequence is Proteasome subunit alpha (261 aa).

Positions 242 to 261 are disordered; that stretch reads NEENKKEEENREETKEKQEE.

The protein belongs to the peptidase T1A family. As to quaternary structure, the 20S proteasome core is composed of 14 alpha and 14 beta subunits that assemble into four stacked heptameric rings, resulting in a barrel-shaped structure. The two inner rings, each composed of seven catalytic beta subunits, are sandwiched by two outer rings, each composed of seven alpha subunits. The catalytic chamber with the active sites is on the inside of the barrel. Has a gated structure, the ends of the cylinder being occluded by the N-termini of the alpha-subunits. Is capped at one or both ends by the proteasome regulatory ATPase, PAN.

It localises to the cytoplasm. The formation of the proteasomal ATPase PAN-20S proteasome complex, via the docking of the C-termini of PAN into the intersubunit pockets in the alpha-rings, triggers opening of the gate for substrate entry. Interconversion between the open-gate and close-gate conformations leads to a dynamic regulation of the 20S proteasome proteolysis activity. In terms of biological role, component of the proteasome core, a large protease complex with broad specificity involved in protein degradation. The M.jannaschii proteasome is able to cleave oligopeptides after Glu, Asp, Tyr, Phe, Trp, slightly after Arg, but not after Ala. Thus, displays caspase-like and chymotrypsin-like activities and low level of trypsin-like activity. In Methanocaldococcus jannaschii (strain ATCC 43067 / DSM 2661 / JAL-1 / JCM 10045 / NBRC 100440) (Methanococcus jannaschii), this protein is Proteasome subunit alpha.